We begin with the raw amino-acid sequence, 501 residues long: Large ribosomal subunit protein uL2m (501 aa).

Disordered stretches follow at residues 187–217 (GRER…APRR) and 459–501 (AMNP…KRRN). Residues 198-213 (NTFSQSEGQRWKTQSG) are compositionally biased toward polar residues. Residues 464 to 474 (DHPHGGGEGRT) are compositionally biased toward basic and acidic residues.

This sequence belongs to the universal ribosomal protein uL2 family.

It localises to the mitochondrion. In Marchantia polymorpha (Common liverwort), this protein is Large ribosomal subunit protein uL2m (RPL2).